The sequence spans 142 residues: Nucleoside diphosphate kinase (142 aa).

Lys-11, Phe-59, Arg-87, Thr-93, Arg-104, and Asn-114 together coordinate ATP. His-117 (pros-phosphohistidine intermediate) is an active-site residue.

Belongs to the NDK family. As to quaternary structure, homotetramer. It depends on Mg(2+) as a cofactor.

The protein resides in the cytoplasm. The enzyme catalyses dZDP + ATP = dZTP + ADP. It carries out the reaction a 2'-deoxyribonucleoside 5'-diphosphate + ATP = a 2'-deoxyribonucleoside 5'-triphosphate + ADP. It catalyses the reaction a ribonucleoside 5'-diphosphate + ATP = a ribonucleoside 5'-triphosphate + ADP. It participates in purine metabolism. Functionally, major role in the synthesis of nucleoside triphosphates other than ATP. The ATP gamma phosphate is transferred to the NDP beta phosphate via a ping-pong mechanism, using a phosphorylated active-site intermediate. In terms of biological role, (Microbial infection) Catalyzes the phosphorylation of dZDP to dZTP, when the bacterium is infected by a phage that produces the substrate for the synthesis of dZTP (2- amino-2'-deoxyadenosine 5'-triphosphate), which is then used by the phage as a DNA polymerase substrate. This is Nucleoside diphosphate kinase from Vibrio cholerae serotype O1 (strain ATCC 39315 / El Tor Inaba N16961).